The primary structure comprises 843 residues: Leucine--tRNA ligase (843 aa).

Residues 61–71 (PYPSGDLHMGH) carry the 'HIGH' region motif. The 'KMSKS' region signature appears at 606 to 610 (AMSKS). Position 609 (Lys609) interacts with ATP.

The protein belongs to the class-I aminoacyl-tRNA synthetase family.

It is found in the cytoplasm. It carries out the reaction tRNA(Leu) + L-leucine + ATP = L-leucyl-tRNA(Leu) + AMP + diphosphate. The chain is Leucine--tRNA ligase from Arthrobacter sp. (strain FB24).